A 284-amino-acid polypeptide reads, in one-letter code: Probable endonuclease 4 (284 aa).

9 residues coordinate Zn(2+): His69, His109, Glu145, Asp179, His182, His216, Asp229, His231, and Glu261.

This sequence belongs to the AP endonuclease 2 family. Requires Zn(2+) as cofactor.

It carries out the reaction Endonucleolytic cleavage to 5'-phosphooligonucleotide end-products.. Endonuclease IV plays a role in DNA repair. It cleaves phosphodiester bonds at apurinic or apyrimidinic (AP) sites, generating a 3'-hydroxyl group and a 5'-terminal sugar phosphate. This chain is Probable endonuclease 4, found in Klebsiella pneumoniae subsp. pneumoniae (strain ATCC 700721 / MGH 78578).